The sequence spans 95 residues: Small ubiquitin-related modifier 4 (95 aa).

The Ubiquitin-like domain maps to 17–95 (HINLKVAGQD…VLQQQTGGVY (79 aa)). Gly-93 is covalently cross-linked (Glycyl lysine isopeptide (Gly-Lys) (interchain with K-? in acceptor proteins)). The propeptide occupies 94 to 95 (VY).

Belongs to the ubiquitin family. SUMO subfamily. Interacts with SAE2. Covalently attached to a number of proteins.

Functionally, ubiquitin-like protein which can be covalently attached to target lysines as a monomer. Does not seem to be involved in protein degradation and may modulate protein subcellular localization, stability or activity. Upon oxidative stress, conjugates to various anti-oxidant enzymes, chaperones, and stress defense proteins. May also conjugate to NFKBIA, TFAP2A and FOS, negatively regulating their transcriptional activity, and to NR3C1, positively regulating its transcriptional activity. Covalent attachment to its substrates requires prior activation by the E1 complex SAE1-SAE2 and linkage to the E2 enzyme UBE2I. This is Small ubiquitin-related modifier 4 (SUMO4) from Sus scrofa (Pig).